The chain runs to 518 residues: Protein nucleotidyltransferase YdiU (518 aa).

A compositionally biased stretch (basic and acidic residues) spans 1 to 10; it reads MTHLRFDNRL. The interval 1–23 is disordered; the sequence is MTHLRFDNRLRQQLPGDPEEGSR. Residues Gly100, Gly102, Arg103, Lys123, Asp135, Gly136, Arg193, and Arg200 each contribute to the ATP site. The active-site Proton acceptor is the Asp270. Positions 271 and 280 each coordinate Mg(2+). Asp280 lines the ATP pocket.

This sequence belongs to the SELO family. It depends on Mg(2+) as a cofactor. Mn(2+) is required as a cofactor.

It catalyses the reaction L-seryl-[protein] + ATP = 3-O-(5'-adenylyl)-L-seryl-[protein] + diphosphate. It carries out the reaction L-threonyl-[protein] + ATP = 3-O-(5'-adenylyl)-L-threonyl-[protein] + diphosphate. The enzyme catalyses L-tyrosyl-[protein] + ATP = O-(5'-adenylyl)-L-tyrosyl-[protein] + diphosphate. The catalysed reaction is L-histidyl-[protein] + UTP = N(tele)-(5'-uridylyl)-L-histidyl-[protein] + diphosphate. It catalyses the reaction L-seryl-[protein] + UTP = O-(5'-uridylyl)-L-seryl-[protein] + diphosphate. It carries out the reaction L-tyrosyl-[protein] + UTP = O-(5'-uridylyl)-L-tyrosyl-[protein] + diphosphate. Functionally, nucleotidyltransferase involved in the post-translational modification of proteins. It can catalyze the addition of adenosine monophosphate (AMP) or uridine monophosphate (UMP) to a protein, resulting in modifications known as AMPylation and UMPylation. The sequence is that of Protein nucleotidyltransferase YdiU from Xanthomonas axonopodis pv. citri (strain 306).